A 205-amino-acid chain; its full sequence is MAQLYFYYSAMNAGKSTALLQSSYNYQERGMRTVVYTAEIDDRFGAGKVSSRIGLSSPAKLFNQNTSLFEEIRAESVRQTIHCVLVDESQFLTRQQVYQLSEVVDKLDIPVLCYGLRTDFRGELFVGSQYLLAWSDKLVELKTICFCGRKASMVLRLDQDGRPYNEGEQVVIGGNERYVSVCRKHYKDALEEGSLTAIQERHRHI.

ATP contacts are provided by residues 9–16 (SAMNAGKS) and 87–90 (DESQ). The Proton acceptor role is filled by E88. Zn(2+)-binding residues include C145, C147, C182, and H185.

The protein belongs to the thymidine kinase family. Homotetramer.

Its subcellular location is the cytoplasm. It catalyses the reaction thymidine + ATP = dTMP + ADP + H(+). The chain is Thymidine kinase from Salmonella choleraesuis (strain SC-B67).